Consider the following 334-residue polypeptide: Oligopeptide transport ATP-binding protein OppF (334 aa).

The 254-residue stretch at 12–265 folds into the ABC transporter domain; sequence LEIADLKVHF…PLHPYTRALM (254 aa). 57–64 provides a ligand contact to ATP; it reads GESGCGKS.

The protein belongs to the ABC transporter superfamily. As to quaternary structure, the complex is composed of two ATP-binding proteins (OppD and OppF), two transmembrane proteins (OppB and OppC) and a solute-binding protein (OppA or MppA).

Its subcellular location is the cell inner membrane. The enzyme catalyses a [peptide](out) + ATP + H2O = a [peptide](in) + ADP + phosphate + H(+). It catalyses the reaction L-alanyl-gamma-D-glutamyl-meso-2,6-diaminopimelate(out) + ATP + H2O = L-alanyl-gamma-D-glutamyl-meso-2,6-diaminopimelate(in) + ADP + phosphate + H(+). Functionally, part of the ABC transporter complex OppABCDF involved in the uptake of oligopeptides and of the ABC transporter complex MppA-OppBCDF involved in the uptake of the cell wall murein tripeptide L-alanyl-gamma-D-glutamyl-meso-diaminopimelate. Probably responsible for energy coupling to the transport system. Plays an important nutritional role and is involved in the recycling of cell wall peptides. The protein is Oligopeptide transport ATP-binding protein OppF (oppF) of Escherichia coli (strain K12).